A 258-amino-acid chain; its full sequence is uncharacterized protein (258 aa).

A run of 7 helical transmembrane segments spans residues 8–28, 38–58, 70–90, 121–141, 176–196, 204–224, and 231–251; these read VFLA…IVWF, VFFI…GGVH, EAMQ…GIFE, LEAI…AFAI, LGGI…LLVL, PLFL…AVLY, and HAAA…YWIV.

The protein localises to the cell membrane. This is an uncharacterized protein from Bacillus subtilis (strain 168).